Reading from the N-terminus, the 209-residue chain is Glutathione S-transferase D1 (209 aa).

The GST N-terminal domain maps to 1 to 81 (MVDFYYLPGS…YLVEKYGKTD (81 aa)). Residues Ser10, 51-53 (HTI), and 65-67 (ESR) each bind glutathione. The 122-residue stretch at 87–208 (CPKKRAVINQ…AGCLEFKKYF (122 aa)) folds into the GST C-terminal domain.

It belongs to the GST superfamily. Delta family. Homodimer.

The enzyme catalyses RX + glutathione = an S-substituted glutathione + a halide anion + H(+). It carries out the reaction 1,1,1-trichloro-2,2-bis(4-chlorophenyl)ethane = 1,1-dichloro-2,2-bis(4-chlorophenyl)ethylene + chloride + H(+). Its function is as follows. Conjugation of reduced glutathione to a wide number of exogenous and endogenous hydrophobic electrophiles. Has DDT dehydrochlorinase activity. May be involved in detoxification. The sequence is that of Glutathione S-transferase D1 from Drosophila melanogaster (Fruit fly).